A 371-amino-acid polypeptide reads, in one-letter code: 4-hydroxy-3-methylbut-2-en-1-yl diphosphate synthase (flavodoxin) (371 aa).

[4Fe-4S] cluster contacts are provided by C268, C271, C303, and E310.

The protein belongs to the IspG family. [4Fe-4S] cluster is required as a cofactor.

The enzyme catalyses (2E)-4-hydroxy-3-methylbut-2-enyl diphosphate + oxidized [flavodoxin] + H2O + 2 H(+) = 2-C-methyl-D-erythritol 2,4-cyclic diphosphate + reduced [flavodoxin]. The protein operates within isoprenoid biosynthesis; isopentenyl diphosphate biosynthesis via DXP pathway; isopentenyl diphosphate from 1-deoxy-D-xylulose 5-phosphate: step 5/6. Converts 2C-methyl-D-erythritol 2,4-cyclodiphosphate (ME-2,4cPP) into 1-hydroxy-2-methyl-2-(E)-butenyl 4-diphosphate. In Lysinibacillus sphaericus (strain C3-41), this protein is 4-hydroxy-3-methylbut-2-en-1-yl diphosphate synthase (flavodoxin).